The primary structure comprises 440 residues: D-serine dehydratase (440 aa).

N6-(pyridoxal phosphate)lysine is present on K116.

It belongs to the serine/threonine dehydratase family. DsdA subfamily. Monomer. Pyridoxal 5'-phosphate is required as a cofactor.

The enzyme catalyses D-serine = pyruvate + NH4(+). The protein is D-serine dehydratase of Salmonella paratyphi A (strain ATCC 9150 / SARB42).